Consider the following 220-residue polypeptide: Iron-sulfur cluster repair protein YtfE (220 aa).

It belongs to the RIC family. YtfE subfamily. As to quaternary structure, homodimer.

It is found in the cytoplasm. Functionally, di-iron-containing protein involved in the repair of iron-sulfur clusters damaged by oxidative and nitrosative stress conditions. The polypeptide is Iron-sulfur cluster repair protein YtfE (Shigella boydii serotype 4 (strain Sb227)).